Here is a 275-residue protein sequence, read N- to C-terminus: Lectin (275 aa).

An N-terminal signal peptide occupies residues 1–30 (MASLQTQMISFYLIFLSILLTTIFFFKVNS). 2 residues coordinate D-glucose: Asp-111 and Gly-129. Residues Glu-149 and Asp-151 each contribute to the Mn(2+) site. Positions 151, 153, 155, and 159 each coordinate Ca(2+). Residues Asp-159 and His-166 each contribute to the Mn(2+) site. Positions 211 to 217 (NSLEEEN) are excised as a propeptide. D-glucose is bound by residues Gly-246 and Ala-247. The propeptide occupies 270–275 (KQAADA).

This sequence belongs to the leguminous lectin family. As to quaternary structure, heterotetramer of two alpha and two beta chains. Post-translationally, the mature form consists of two chains, alpha and beta, produced by cleavage of the immature protein. These remain cleaved, yet fold together to form one subunit.

Its function is as follows. D-mannose specific lectin. In Lens culinaris subsp. orientalis (Oriental wild lentil), this protein is Lectin.